A 304-amino-acid polypeptide reads, in one-letter code: Putative S-adenosyl-L-methionine-dependent methyltransferase MAV_4236 (304 aa).

S-adenosyl-L-methionine is bound by residues Asp-129 and 158–159 (DL).

It belongs to the UPF0677 family.

Its function is as follows. Exhibits S-adenosyl-L-methionine-dependent methyltransferase activity. In Mycobacterium avium (strain 104), this protein is Putative S-adenosyl-L-methionine-dependent methyltransferase MAV_4236.